The chain runs to 85 residues: Makatoxin-2 (85 aa).

The signal sequence occupies residues 1–19 (MNYLIVISFALLLMTSVES). The 63-residue stretch at 21 to 83 (RDAYIADSEN…VPIRIPGPCR (63 aa)) folds into the LCN-type CS-alpha/beta domain. 4 disulfides stabilise this stretch: C31–C82, C35–C55, C41–C65, and C45–C67.

It belongs to the long (4 C-C) scorpion toxin superfamily. Sodium channel inhibitor family. Alpha subfamily. As to expression, expressed by the venom gland.

It localises to the secreted. Its function is as follows. This protein markedly relaxes the rat carbachol-precontracted anococcygeus muscle. This relaxation is inhibited by the inhibitor of nitric oxide (NO) synthase, N-nitro-L-arginine methyl ester (L-NAME), suggesting that the response induced by this protein is NO-mediated. This is Makatoxin-2 from Olivierus martensii (Manchurian scorpion).